A 338-amino-acid chain; its full sequence is Glyceraldehyde-3-phosphate dehydrogenase (338 aa).

NAD(+)-binding positions include 12 to 13 (RI), D34, and R79. D-glyceraldehyde 3-phosphate contacts are provided by residues 150-152 (SCT), T181, 210-211 (TG), and R233. Residue C151 is the Nucleophile of the active site. Position 315 (N315) interacts with NAD(+).

It belongs to the glyceraldehyde-3-phosphate dehydrogenase family. In terms of assembly, homotetramer.

The protein localises to the cytoplasm. The enzyme catalyses D-glyceraldehyde 3-phosphate + phosphate + NAD(+) = (2R)-3-phospho-glyceroyl phosphate + NADH + H(+). The protein operates within carbohydrate degradation; glycolysis; pyruvate from D-glyceraldehyde 3-phosphate: step 1/5. In Hypocrea atroviridis (Trichoderma atroviride), this protein is Glyceraldehyde-3-phosphate dehydrogenase (gpd1).